The primary structure comprises 95 residues: Aspartyl/glutamyl-tRNA(Asn/Gln) amidotransferase subunit C (95 aa).

The protein belongs to the GatC family. In terms of assembly, heterotrimer of A, B and C subunits.

The catalysed reaction is L-glutamyl-tRNA(Gln) + L-glutamine + ATP + H2O = L-glutaminyl-tRNA(Gln) + L-glutamate + ADP + phosphate + H(+). It catalyses the reaction L-aspartyl-tRNA(Asn) + L-glutamine + ATP + H2O = L-asparaginyl-tRNA(Asn) + L-glutamate + ADP + phosphate + 2 H(+). Allows the formation of correctly charged Asn-tRNA(Asn) or Gln-tRNA(Gln) through the transamidation of misacylated Asp-tRNA(Asn) or Glu-tRNA(Gln) in organisms which lack either or both of asparaginyl-tRNA or glutaminyl-tRNA synthetases. The reaction takes place in the presence of glutamine and ATP through an activated phospho-Asp-tRNA(Asn) or phospho-Glu-tRNA(Gln). This chain is Aspartyl/glutamyl-tRNA(Asn/Gln) amidotransferase subunit C, found in Methylobacterium nodulans (strain LMG 21967 / CNCM I-2342 / ORS 2060).